Here is a 1119-residue protein sequence, read N- to C-terminus: SH3 and PX domain-containing protein 2A (1119 aa).

Residues 4–128 (RTVLDVKVVD…RFFETKPDDI (125 aa)) enclose the PX domain. SH3 domains lie at 149–208 (MVLE…SQSG) and 249–308 (SREE…KLKD). 5 disordered regions span residues 388 to 429 (SSAT…PPRR), 494 to 595 (APSS…SNPA), 641 to 815 (SSDD…HESV), 914 to 941 (NLRSMSNPSPPIPSKPPGGFSKPTAMLN), and 957 to 1004 (RPQS…SSFT). Residues 445–504 (TVEAEYYTIAEFQSSISDGISFRGGQKADVIEKNSGGWWYVQIGDTEGWAPSSYIDKRKK) form the SH3 3 domain. Composition is skewed to basic and acidic residues over residues 581 to 590 (PKPEPRKFEI) and 688 to 718 (GRAERHSSKLFSDESARNPKREPVMRKDVEI). Residues 779–802 (TASVVSSEDSTSSRSTSDLSSVYS) show a composition bias toward low complexity. The span at 806–815 (RGGESDHESV) shows a compositional bias: basic and acidic residues. The SH3 4 domain maps to 812-871 (HESVLFRTTDAYERAQESELSFPAGVEVEVLEKQESGWWFVRWGSDEGWVPTFYLEPIKH). The 62-residue stretch at 1058–1119 (NLREVYVSIA…VPSNYLERKK (62 aa)) folds into the SH3 5 domain.

This sequence belongs to the SH3PXD2 family. In terms of processing, tyrosine phosphorylated.

The protein resides in the cytoplasm. It is found in the cell projection. Its subcellular location is the podosome. In terms of biological role, adapter protein involved in invadopodia and podosome formation and extracellular matrix degradation. This is SH3 and PX domain-containing protein 2A (sh3pxd2a) from Danio rerio (Zebrafish).